Reading from the N-terminus, the 1235-residue chain is ATP-dependent helicase/nuclease subunit A (1235 aa).

In terms of domain architecture, UvrD-like helicase ATP-binding spans 4 to 470; it reads REYTLSQKQA…IILAENFRSM (467 aa). ATP is bound at residue 25–32; sequence ASAGSGKT. One can recognise a UvrD-like helicase C-terminal domain in the interval 501-795; the sequence is QFGAKYYPDE…KLMTIHGSKG (295 aa).

It belongs to the helicase family. AddA subfamily. As to quaternary structure, heterodimer of AddA and AddB/RexB. It depends on Mg(2+) as a cofactor.

It catalyses the reaction Couples ATP hydrolysis with the unwinding of duplex DNA by translocating in the 3'-5' direction.. It carries out the reaction ATP + H2O = ADP + phosphate + H(+). Functionally, the heterodimer acts as both an ATP-dependent DNA helicase and an ATP-dependent, dual-direction single-stranded exonuclease. Recognizes the chi site generating a DNA molecule suitable for the initiation of homologous recombination. The AddA nuclease domain is required for chi fragment generation; this subunit has the helicase and 3' -&gt; 5' nuclease activities. In Pediococcus pentosaceus (strain ATCC 25745 / CCUG 21536 / LMG 10740 / 183-1w), this protein is ATP-dependent helicase/nuclease subunit A.